Reading from the N-terminus, the 174-residue chain is Crossover junction endodeoxyribonuclease RuvC (174 aa).

Residues Asp-8, Glu-68, and Asp-140 contribute to the active site. Mg(2+) is bound by residues Asp-8, Glu-68, and Asp-140.

This sequence belongs to the RuvC family. As to quaternary structure, homodimer which binds Holliday junction (HJ) DNA. The HJ becomes 2-fold symmetrical on binding to RuvC with unstacked arms; it has a different conformation from HJ DNA in complex with RuvA. In the full resolvosome a probable DNA-RuvA(4)-RuvB(12)-RuvC(2) complex forms which resolves the HJ. Requires Mg(2+) as cofactor.

It is found in the cytoplasm. The enzyme catalyses Endonucleolytic cleavage at a junction such as a reciprocal single-stranded crossover between two homologous DNA duplexes (Holliday junction).. In terms of biological role, the RuvA-RuvB-RuvC complex processes Holliday junction (HJ) DNA during genetic recombination and DNA repair. Endonuclease that resolves HJ intermediates. Cleaves cruciform DNA by making single-stranded nicks across the HJ at symmetrical positions within the homologous arms, yielding a 5'-phosphate and a 3'-hydroxyl group; requires a central core of homology in the junction. The consensus cleavage sequence is 5'-(A/T)TT(C/G)-3'. Cleavage occurs on the 3'-side of the TT dinucleotide at the point of strand exchange. HJ branch migration catalyzed by RuvA-RuvB allows RuvC to scan DNA until it finds its consensus sequence, where it cleaves and resolves the cruciform DNA. This Legionella pneumophila (strain Corby) protein is Crossover junction endodeoxyribonuclease RuvC.